We begin with the raw amino-acid sequence, 463 residues long: L-seryl-tRNA(Sec) selenium transferase (463 aa).

Lysine 295 is modified (N6-(pyridoxal phosphate)lysine).

It belongs to the SelA family. Homodecamer; pentamer of dimers. Binds only one seryl-tRNA(Sec) per dimer. The cofactor is pyridoxal 5'-phosphate.

The protein resides in the cytoplasm. The catalysed reaction is L-seryl-tRNA(Sec) + selenophosphate + H(+) = L-selenocysteinyl-tRNA(Sec) + phosphate. Its pathway is aminoacyl-tRNA biosynthesis; selenocysteinyl-tRNA(Sec) biosynthesis; selenocysteinyl-tRNA(Sec) from L-seryl-tRNA(Sec) (bacterial route): step 1/1. In terms of biological role, converts seryl-tRNA(Sec) to selenocysteinyl-tRNA(Sec) required for selenoprotein biosynthesis. The chain is L-seryl-tRNA(Sec) selenium transferase from Proteus mirabilis (strain HI4320).